Reading from the N-terminus, the 317-residue chain is MKVLWAALLVTFLAGCQAKVEQAVEPEPEPELRQQAEWQSGQPWELALGRFWDYLRWVQTLSEQVQEELLSSQVTQELTALMDETMKELKAYRSELEEQLTPVAEETRARLSKELQAAQARLGADMEDVRGRLVQYRGEVQAMLGQSTEELRARLASHLRKLRKRLLRDADDLQKRLAVYQAGAREGAERGVSAIRERLGPLVEQGRVRAATVGSLAGQPLQERAQAWGERLRARMEEVGGRTRDRLDEVKEQVAEVRAKLEEQAQQIRLQAEAFQARLKSWFEPLVEDMQRQWAGLVEKVQAAVGTSAAPVPSDNH.

A signal peptide spans 1 to 18; it reads MKVLWAALLVTFLAGCQA. 8 tandem repeats follow at residues 80-101, 102-123, 124-145, 146-167, 168-189, 190-211, 212-233, and 234-255. The tract at residues 80-255 is 8 X 22 AA approximate tandem repeats; that stretch reads ALMDETMKEL…RLDEVKEQVA (176 aa). Met-143 bears the Methionine sulfoxide mark. Ser-147 carries the phosphoserine modification. The LDL and other lipoprotein receptors binding stretch occupies residues 158-168; the sequence is HLRKLRKRLLR. 162 to 165 contacts heparin; that stretch reads LRKR. The tract at residues 210–290 is lipid-binding and lipoprotein association; sequence AATVGSLAGQ…SWFEPLVEDM (81 aa). 229-236 is a binding site for heparin; the sequence is GERLRARM. A homooligomerization region spans residues 266–317; the sequence is QQIRLQAEAFQARLKSWFEPLVEDMQRQWAGLVEKVQAAVGTSAAPVPSDNH. Residues 278-290 form a specificity for association with VLDL region; the sequence is RLKSWFEPLVEDM.

The protein belongs to the apolipoprotein A1/A4/E family. In terms of assembly, homotetramer. May interact with ABCA1; functionally associated with ABCA1 in the biogenesis of HDLs. May interact with APP/A4 amyloid-beta peptide; the interaction is extremely stable in vitro but its physiological significance is unclear. May interact with MAPT. May interact with MAP2. In the cerebrospinal fluid, interacts with secreted SORL1. Interacts with PMEL; this allows the loading of PMEL luminal fragment on ILVs to induce fibril nucleation. APOE exists as multiple glycosylated and sialylated glycoforms within cells and in plasma. The extent of glycosylation and sialylation are tissue and context specific. In terms of processing, glycated in plasma VLDL. Post-translationally, phosphorylated by FAM20C in the extracellular medium.

Its subcellular location is the secreted. The protein localises to the extracellular space. The protein resides in the extracellular matrix. It localises to the extracellular vesicle. It is found in the endosome. Its subcellular location is the multivesicular body. Its function is as follows. APOE is an apolipoprotein, a protein associating with lipid particles, that mainly functions in lipoprotein-mediated lipid transport between organs via the plasma and interstitial fluids. APOE is a core component of plasma lipoproteins and is involved in their production, conversion and clearance. Apolipoproteins are amphipathic molecules that interact both with lipids of the lipoprotein particle core and the aqueous environment of the plasma. As such, APOE associates with chylomicrons, chylomicron remnants, very low density lipoproteins (VLDL) and intermediate density lipoproteins (IDL) but shows a preferential binding to high-density lipoproteins (HDL). It also binds a wide range of cellular receptors including the LDL receptor/LDLR, the LDL receptor-related proteins LRP1, LRP2 and LRP8 and the very low-density lipoprotein receptor/VLDLR that mediate the cellular uptake of the APOE-containing lipoprotein particles. Finally, APOE also has a heparin-binding activity and binds heparan-sulfate proteoglycans on the surface of cells, a property that supports the capture and the receptor-mediated uptake of APOE-containing lipoproteins by cells. A main function of APOE is to mediate lipoprotein clearance through the uptake of chylomicrons, VLDLs, and HDLs by hepatocytes. APOE is also involved in the biosynthesis by the liver of VLDLs as well as their uptake by peripheral tissues ensuring the delivery of triglycerides and energy storage in muscle, heart and adipose tissues. By participating in the lipoprotein-mediated distribution of lipids among tissues, APOE plays a critical role in plasma and tissues lipid homeostasis. APOE is also involved in two steps of reverse cholesterol transport, the HDLs-mediated transport of cholesterol from peripheral tissues to the liver, and thereby plays an important role in cholesterol homeostasis. First, it is functionally associated with ABCA1 in the biogenesis of HDLs in tissues. Second, it is enriched in circulating HDLs and mediates their uptake by hepatocytes. APOE also plays an important role in lipid transport in the central nervous system, regulating neuron survival and sprouting. The polypeptide is Apolipoprotein E (APOE) (Hylobates lar (Lar gibbon)).